We begin with the raw amino-acid sequence, 554 residues long: Zinc finger protein 426 (554 aa).

One can recognise a KRAB domain in the interval 42–112 (VTFDDVAVDF…QGGVLQGWEM (71 aa)). The C2H2-type 1; atypical zinc-finger motif lies at 146 to 174 (CDCEQCGEVFSEHSCLKTHVRTQSTGNTH). 11 C2H2-type zinc fingers span residues 224 to 246 (FECS…MRTH), 280 to 302 (YKCK…MRTH), 308 to 330 (YECK…GRTH), 336 to 358 (YVCK…VRSH), 364 to 386 (YECK…IRTH), 392 to 414 (FVCV…LRTH), 420 to 442 (CECK…MRTH), 448 to 470 (YTCK…MRIH), 476 to 498 (YECK…ERTH), 504 to 526 (YECK…EKTH), and 532 to 554 (YKCQ…EQIH).

It localises to the nucleus. May be involved in transcriptional regulation. This chain is Zinc finger protein 426 (ZNF426), found in Homo sapiens (Human).